The primary structure comprises 317 residues: UV DNA damage endonuclease (317 aa).

Belongs to the uve1/UvsE family.

In terms of biological role, component in a DNA repair pathway. Removal of UV LIGHT damaged nucleotides. Recognizes pyrimidine dimers and cleave a phosphodiester bond immediately 5' to the lesion. The protein is UV DNA damage endonuclease of Bacillus cereus (strain Q1).